Consider the following 598-residue polypeptide: uncharacterized protein (598 aa).

Mn(2+)-binding residues include Asp397, Asp408, Glu506, and Glu520.

The protein belongs to the peptidase M24B family. The cofactor is Mn(2+).

This is an uncharacterized protein from Schizosaccharomyces pombe (strain 972 / ATCC 24843) (Fission yeast).